The sequence spans 290 residues: Probable branched-chain-amino-acid aminotransferase (290 aa).

An N6-(pyridoxal phosphate)lysine modification is found at lysine 155.

It belongs to the class-IV pyridoxal-phosphate-dependent aminotransferase family. Pyridoxal 5'-phosphate is required as a cofactor.

The catalysed reaction is L-leucine + 2-oxoglutarate = 4-methyl-2-oxopentanoate + L-glutamate. It catalyses the reaction L-isoleucine + 2-oxoglutarate = (S)-3-methyl-2-oxopentanoate + L-glutamate. It carries out the reaction L-valine + 2-oxoglutarate = 3-methyl-2-oxobutanoate + L-glutamate. The protein operates within amino-acid biosynthesis; L-isoleucine biosynthesis; L-isoleucine from 2-oxobutanoate: step 4/4. Its pathway is amino-acid biosynthesis; L-leucine biosynthesis; L-leucine from 3-methyl-2-oxobutanoate: step 4/4. It functions in the pathway amino-acid biosynthesis; L-valine biosynthesis; L-valine from pyruvate: step 4/4. In terms of biological role, acts on leucine, isoleucine and valine. The chain is Probable branched-chain-amino-acid aminotransferase (ilvE) from Rickettsia felis (strain ATCC VR-1525 / URRWXCal2) (Rickettsia azadi).